The chain runs to 105 residues: Small ribosomal subunit protein uS14m (105 aa).

This sequence belongs to the universal ribosomal protein uS14 family. In terms of assembly, component of the mitochondrial small ribosomal subunit (mt-SSU). Mature yeast 74S mitochondrial ribosomes consist of a small (37S) and a large (54S) subunit. The 37S small subunit contains a 15S ribosomal RNA (15S mt-rRNA) and at least 32 different proteins. The 54S large subunit contains a 21S rRNA (21S mt-rRNA) and at least 45 different proteins.

It is found in the mitochondrion. Its function is as follows. Component of the mitochondrial ribosome (mitoribosome), a dedicated translation machinery responsible for the synthesis of mitochondrial genome-encoded proteins, including at least some of the essential transmembrane subunits of the mitochondrial respiratory chain. The mitoribosomes are attached to the mitochondrial inner membrane and translation products are cotranslationally integrated into the membrane. This chain is Small ribosomal subunit protein uS14m (mrp2), found in Schizosaccharomyces pombe (strain 972 / ATCC 24843) (Fission yeast).